We begin with the raw amino-acid sequence, 156 residues long: Cell division protein SepF (156 aa).

Over residues Ser23–Asp36 the composition is skewed to basic and acidic residues. The interval Ser23–Pro50 is disordered.

This sequence belongs to the SepF family. As to quaternary structure, homodimer. Interacts with FtsZ.

The protein localises to the cytoplasm. Its function is as follows. Cell division protein that is part of the divisome complex and is recruited early to the Z-ring. Probably stimulates Z-ring formation, perhaps through the cross-linking of FtsZ protofilaments. Its function overlaps with FtsA. This is Cell division protein SepF from Bacillus thuringiensis (strain Al Hakam).